The primary structure comprises 316 residues: uncharacterized protein (316 aa).

Belongs to the chlamydial CPn_0441/CT_007/TC_0275 family.

This is an uncharacterized protein from Chlamydia trachomatis serovar D (strain ATCC VR-885 / DSM 19411 / UW-3/Cx).